Consider the following 294-residue polypeptide: Probable ABC transporter permease protein YqgI (294 aa).

Transmembrane regions (helical) follow at residues 14–34 (FGLC…YIII), 66–86 (FYIL…GGVF), 99–121 (FIRT…FGLL), 126–148 (LTGW…LPVM), 190–210 (IITG…ALLF), and 260–280 (AIAN…NLAA). The ABC transmembrane type-1 domain maps to 62-280 (LFNSFYILFI…ISVLVFNLAA (219 aa)).

It belongs to the binding-protein-dependent transport system permease family. CysTW subfamily.

The protein localises to the cell membrane. Its function is as follows. Part of the binding-protein-dependent transport system YqgGHIJK. Probably responsible for the translocation of the substrate across the membrane. This Bacillus subtilis (strain 168) protein is Probable ABC transporter permease protein YqgI (yqgI).